Here is a 486-residue protein sequence, read N- to C-terminus: Homoserine O-acetyltransferase (486 aa).

The AB hydrolase-1 domain occupies 66 to 436 (NVLVICHALT…PEGHDAFLLE (371 aa)). The active site involves Ser-162. Catalysis depends on Ser-162, which acts as the Nucleophile. The interval 248–274 (KFSRRSPSIAQQQKAQKAEVRKPSTVS) is disordered. A compositionally biased stretch (polar residues) spans 250–262 (SRRSPSIAQQQKA). Residues Asp-401 and His-430 contribute to the active site.

It belongs to the AB hydrolase superfamily. MetX family.

The enzyme catalyses L-homoserine + acetyl-CoA = O-acetyl-L-homoserine + CoA. Its pathway is amino-acid biosynthesis; L-methionine biosynthesis via de novo pathway; O-acetyl-L-homoserine from L-homoserine: step 1/1. In terms of biological role, commits homoserine to the methionine biosynthesis pathway by catalyzing its O-acetylation. In Saccharomyces pastorianus (Lager yeast), this protein is Homoserine O-acetyltransferase (MET2).